We begin with the raw amino-acid sequence, 576 residues long: Dihydroxy-acid dehydratase (576 aa).

C56 lines the [2Fe-2S] cluster pocket. Mg(2+) is bound at residue D88. C129 contributes to the [2Fe-2S] cluster binding site. Residues D130 and K131 each coordinate Mg(2+). N6-carboxylysine is present on K131. [2Fe-2S] cluster is bound at residue C201. Residue E453 coordinates Mg(2+). S479 acts as the Proton acceptor in catalysis.

It belongs to the IlvD/Edd family. In terms of assembly, homodimer. [2Fe-2S] cluster serves as cofactor. It depends on Mg(2+) as a cofactor.

The enzyme catalyses (2R)-2,3-dihydroxy-3-methylbutanoate = 3-methyl-2-oxobutanoate + H2O. It carries out the reaction (2R,3R)-2,3-dihydroxy-3-methylpentanoate = (S)-3-methyl-2-oxopentanoate + H2O. Its pathway is amino-acid biosynthesis; L-isoleucine biosynthesis; L-isoleucine from 2-oxobutanoate: step 3/4. It functions in the pathway amino-acid biosynthesis; L-valine biosynthesis; L-valine from pyruvate: step 3/4. Its function is as follows. Functions in the biosynthesis of branched-chain amino acids. Catalyzes the dehydration of (2R,3R)-2,3-dihydroxy-3-methylpentanoate (2,3-dihydroxy-3-methylvalerate) into 2-oxo-3-methylpentanoate (2-oxo-3-methylvalerate) and of (2R)-2,3-dihydroxy-3-methylbutanoate (2,3-dihydroxyisovalerate) into 2-oxo-3-methylbutanoate (2-oxoisovalerate), the penultimate precursor to L-isoleucine and L-valine, respectively. This is Dihydroxy-acid dehydratase from Parvibaculum lavamentivorans (strain DS-1 / DSM 13023 / NCIMB 13966).